The primary structure comprises 555 residues: CTP synthase (555 aa).

Residues 1–271 (MVKRGKKTKY…DDKLAELFNI (271 aa)) are amidoligase domain. Ser19 provides a ligand contact to CTP. Ser19 lines the UTP pocket. ATP contacts are provided by residues 20 to 25 (SLGKGL) and Asp77. Mg(2+)-binding residues include Asp77 and Glu145. Residues 152–154 (DIE), 192–197 (KTKPTQ), and Lys228 contribute to the CTP site. UTP-binding positions include 192 to 197 (KTKPTQ) and Lys228. Positions 297 to 537 (RIGIVGKYVE…VKAALEHRDA (241 aa)) constitute a Glutamine amidotransferase type-1 domain. Gly358 is a binding site for L-glutamine. The active-site Nucleophile; for glutamine hydrolysis is the Cys385. L-glutamine contacts are provided by residues 386 to 389 (LGLQ), Glu409, and Arg466. Residues His510 and Glu512 contribute to the active site. Residues 535–555 (RDAQQRQPPAEVKKLAVGKNG) are disordered.

The protein belongs to the CTP synthase family. As to quaternary structure, homotetramer.

It carries out the reaction UTP + L-glutamine + ATP + H2O = CTP + L-glutamate + ADP + phosphate + 2 H(+). It catalyses the reaction L-glutamine + H2O = L-glutamate + NH4(+). The catalysed reaction is UTP + NH4(+) + ATP = CTP + ADP + phosphate + 2 H(+). It participates in pyrimidine metabolism; CTP biosynthesis via de novo pathway; CTP from UDP: step 2/2. Its activity is regulated as follows. Allosterically activated by GTP, when glutamine is the substrate; GTP has no effect on the reaction when ammonia is the substrate. The allosteric effector GTP functions by stabilizing the protein conformation that binds the tetrahedral intermediate(s) formed during glutamine hydrolysis. Inhibited by the product CTP, via allosteric rather than competitive inhibition. In terms of biological role, catalyzes the ATP-dependent amination of UTP to CTP with either L-glutamine or ammonia as the source of nitrogen. Regulates intracellular CTP levels through interactions with the four ribonucleotide triphosphates. The chain is CTP synthase from Anaeromyxobacter dehalogenans (strain 2CP-1 / ATCC BAA-258).